Reading from the N-terminus, the 190-residue chain is Small ribosomal subunit protein uS4 (190 aa).

Positions 105–181 (RRLQTLVYKL…RKKAKAAEGG (77 aa)) constitute an S4 RNA-binding domain. The disordered stretch occupies residues 163-190 (GGGRPGRVRRKKAKAAEGGDGDAEEDEE). Acidic residues predominate over residues 181-190 (GDGDAEEDEE).

This sequence belongs to the universal ribosomal protein uS4 family.

The sequence is that of Small ribosomal subunit protein uS4 (RPS9) from Podospora anserina (Pleurage anserina).